The primary structure comprises 600 residues: Arginine--tRNA ligase (600 aa).

L-arginine contacts are provided by residues 151-153, His-162, Tyr-332, Asp-336, and Gln-360; that span reads SPN. Positions 152 to 162 match the 'HIGH' region motif; sequence PNIAKEMHIGH.

Belongs to the class-I aminoacyl-tRNA synthetase family.

The catalysed reaction is tRNA(Arg) + L-arginine + ATP = L-arginyl-tRNA(Arg) + AMP + diphosphate. The polypeptide is Arginine--tRNA ligase (RARS) (Acanthamoeba polyphaga mimivirus (APMV)).